Reading from the N-terminus, the 248-residue chain is Ubiquinone/menaquinone biosynthesis C-methyltransferase UbiE (248 aa).

S-adenosyl-L-methionine contacts are provided by Ser68 and Asp92.

The protein belongs to the class I-like SAM-binding methyltransferase superfamily. MenG/UbiE family.

The catalysed reaction is a 2-demethylmenaquinol + S-adenosyl-L-methionine = a menaquinol + S-adenosyl-L-homocysteine + H(+). It carries out the reaction a 2-methoxy-6-(all-trans-polyprenyl)benzene-1,4-diol + S-adenosyl-L-methionine = a 5-methoxy-2-methyl-3-(all-trans-polyprenyl)benzene-1,4-diol + S-adenosyl-L-homocysteine + H(+). It participates in quinol/quinone metabolism; menaquinone biosynthesis; menaquinol from 1,4-dihydroxy-2-naphthoate: step 2/2. The protein operates within cofactor biosynthesis; ubiquinone biosynthesis. In terms of biological role, methyltransferase required for the conversion of demethylmenaquinol (DMKH2) to menaquinol (MKH2) and the conversion of 2-polyprenyl-6-methoxy-1,4-benzoquinol (DDMQH2) to 2-polyprenyl-3-methyl-6-methoxy-1,4-benzoquinol (DMQH2). This chain is Ubiquinone/menaquinone biosynthesis C-methyltransferase UbiE, found in Rickettsia bellii (strain RML369-C).